Reading from the N-terminus, the 83-residue chain is Small ribosomal subunit protein bS20 (83 aa).

It belongs to the bacterial ribosomal protein bS20 family.

Its function is as follows. Binds directly to 16S ribosomal RNA. The chain is Small ribosomal subunit protein bS20 from Leuconostoc citreum (strain KM20).